Here is a 206-residue protein sequence, read N- to C-terminus: Probable chemoreceptor glutamine deamidase CheD 1 (206 aa).

Belongs to the CheD family.

It carries out the reaction L-glutaminyl-[protein] + H2O = L-glutamyl-[protein] + NH4(+). Probably deamidates glutamine residues to glutamate on methyl-accepting chemotaxis receptors (MCPs), playing an important role in chemotaxis. The sequence is that of Probable chemoreceptor glutamine deamidase CheD 1 from Shewanella oneidensis (strain ATCC 700550 / JCM 31522 / CIP 106686 / LMG 19005 / NCIMB 14063 / MR-1).